The sequence spans 327 residues: Lipoyl synthase (327 aa).

Residues Cys-72, Cys-77, Cys-83, Cys-98, Cys-102, Cys-105, and Ser-313 each contribute to the [4Fe-4S] cluster site. Positions Cys-83–Leu-302 constitute a Radical SAM core domain.

It belongs to the radical SAM superfamily. Lipoyl synthase family. It depends on [4Fe-4S] cluster as a cofactor.

The protein localises to the cytoplasm. The catalysed reaction is [[Fe-S] cluster scaffold protein carrying a second [4Fe-4S](2+) cluster] + N(6)-octanoyl-L-lysyl-[protein] + 2 oxidized [2Fe-2S]-[ferredoxin] + 2 S-adenosyl-L-methionine + 4 H(+) = [[Fe-S] cluster scaffold protein] + N(6)-[(R)-dihydrolipoyl]-L-lysyl-[protein] + 4 Fe(3+) + 2 hydrogen sulfide + 2 5'-deoxyadenosine + 2 L-methionine + 2 reduced [2Fe-2S]-[ferredoxin]. The protein operates within protein modification; protein lipoylation via endogenous pathway; protein N(6)-(lipoyl)lysine from octanoyl-[acyl-carrier-protein]: step 2/2. Catalyzes the radical-mediated insertion of two sulfur atoms into the C-6 and C-8 positions of the octanoyl moiety bound to the lipoyl domains of lipoate-dependent enzymes, thereby converting the octanoylated domains into lipoylated derivatives. This is Lipoyl synthase from Francisella tularensis subsp. novicida (strain U112).